Consider the following 105-residue polypeptide: Met repressor (105 aa).

It belongs to the MetJ family. As to quaternary structure, homodimer.

It localises to the cytoplasm. In terms of biological role, this regulatory protein, when combined with SAM (S-adenosylmethionine) represses the expression of the methionine regulon and of enzymes involved in SAM synthesis. This is Met repressor from Photorhabdus laumondii subsp. laumondii (strain DSM 15139 / CIP 105565 / TT01) (Photorhabdus luminescens subsp. laumondii).